The sequence spans 201 residues: Large ribosomal subunit protein uL4 (201 aa).

A disordered region spans residues 45 to 72 (AQKTRAEVTGSGKKPWRQKGTGRARAGS).

It belongs to the universal ribosomal protein uL4 family. In terms of assembly, part of the 50S ribosomal subunit.

One of the primary rRNA binding proteins, this protein initially binds near the 5'-end of the 23S rRNA. It is important during the early stages of 50S assembly. It makes multiple contacts with different domains of the 23S rRNA in the assembled 50S subunit and ribosome. Its function is as follows. Forms part of the polypeptide exit tunnel. This is Large ribosomal subunit protein uL4 from Shewanella baltica (strain OS223).